The following is a 299-amino-acid chain: Arginase (299 aa).

Mn(2+)-binding residues include H99, D122, H124, and D126. Substrate is bound by residues 124–128, 135–137, and D178; these read HGDVN and SGN. 2 residues coordinate Mn(2+): D226 and D228. Residues T240 and E271 each contribute to the substrate site.

The protein belongs to the arginase family. Homohexamer. It depends on Mn(2+) as a cofactor.

It carries out the reaction L-arginine + H2O = urea + L-ornithine. The protein operates within nitrogen metabolism; urea cycle; L-ornithine and urea from L-arginine: step 1/1. In terms of biological role, controls arginine catabolism. This chain is Arginase (rocF), found in Bacillus caldovelox.